Reading from the N-terminus, the 435-residue chain is Elongation factor 1-alpha (435 aa).

Residues Lys-4–Val-229 enclose the tr-type G domain. The tract at residues Gly-13–Ser-20 is G1. Gly-13–Ser-20 lines the GTP pocket. Ser-20 lines the Mg(2+) pocket. The segment at Gly-69–Asn-73 is G2. The segment at Asp-90–Gly-93 is G3. GTP contacts are provided by residues Asp-90–His-94 and Asn-152–Asp-155. A G4 region spans residues Asn-152 to Asp-155. Positions Val-193 to Pro-195 are G5.

It belongs to the TRAFAC class translation factor GTPase superfamily. Classic translation factor GTPase family. EF-Tu/EF-1A subfamily.

The protein resides in the cytoplasm. It carries out the reaction GTP + H2O = GDP + phosphate + H(+). Its function is as follows. GTP hydrolase that promotes the GTP-dependent binding of aminoacyl-tRNA to the A-site of ribosomes during protein biosynthesis. In Sulfurisphaera tokodaii (strain DSM 16993 / JCM 10545 / NBRC 100140 / 7) (Sulfolobus tokodaii), this protein is Elongation factor 1-alpha.